The sequence spans 541 residues: uncharacterized protein (541 aa).

A signal peptide (tat-type signal) is located at residues 1–55 (MTKTVTRAGGASGPQQFQSGGETMKYEITRRRFLAASSAVLAAPAIVTMVRPARA). The segment at 339–362 (RRSPSGISSPRSNRQPKAEALSAR) is disordered. The span at 341 to 351 (SPSGISSPRSN) shows a compositional bias: low complexity. 4 helical membrane-spanning segments follow: residues 379–399 (AIVW…MVFM), 420–440 (LPVL…AHSG), 466–486 (LVSA…GEIA), and 500–520 (VGYF…LAVA).

The protein belongs to the bacterial solute-binding protein 7 family. Predicted to be exported by the Tat system. The position of the signal peptide cleavage has not been experimentally proven.

It is found in the cell membrane. This is an uncharacterized protein from Sinorhizobium fredii (strain NBRC 101917 / NGR234).